Here is a 66-residue protein sequence, read N- to C-terminus: Toxin NaTx-4 (66 aa).

In terms of domain architecture, LCN-type CS-alpha/beta spans 1 to 64 (KEGYLVNKET…TFPIPGKTCS (64 aa)). 4 disulfide bridges follow: Cys-12–Cys-63, Cys-16–Cys-39, Cys-25–Cys-44, and Cys-29–Cys-46.

It belongs to the long (4 C-C) scorpion toxin superfamily. Sodium channel inhibitor family. As to expression, expressed by the venom gland.

The protein localises to the secreted. Its function is as follows. Probable sodium channel inhibitor. The protein is Toxin NaTx-4 of Centruroides sculpturatus (Arizona bark scorpion).